The sequence spans 156 residues: Transcriptional regulator MraZ (156 aa).

SpoVT-AbrB domains lie at 7–64 (KERH…EPSV) and 93–136 (LEMV…EPAR).

This sequence belongs to the MraZ family. Forms oligomers.

The protein localises to the cytoplasm. The protein resides in the nucleoid. This is Transcriptional regulator MraZ from Chlorobium phaeovibrioides (strain DSM 265 / 1930) (Prosthecochloris vibrioformis (strain DSM 265)).